Consider the following 130-residue polypeptide: Small ribosomal subunit protein eS8 (130 aa).

Belongs to the eukaryotic ribosomal protein eS8 family. As to quaternary structure, part of the 30S ribosomal subunit.

The protein is Small ribosomal subunit protein eS8 of Thermococcus gammatolerans (strain DSM 15229 / JCM 11827 / EJ3).